The primary structure comprises 78 residues: Acyl carrier protein (78 aa).

The Carrier domain maps to 2-77 (SDIAERVKKI…DAIKFLEKNS (76 aa)). S37 carries the post-translational modification O-(pantetheine 4'-phosphoryl)serine.

Belongs to the acyl carrier protein (ACP) family. In terms of processing, 4'-phosphopantetheine is transferred from CoA to a specific serine of apo-ACP by AcpS. This modification is essential for activity because fatty acids are bound in thioester linkage to the sulfhydryl of the prosthetic group.

The protein localises to the cytoplasm. The protein operates within lipid metabolism; fatty acid biosynthesis. Its function is as follows. Carrier of the growing fatty acid chain in fatty acid biosynthesis. The protein is Acyl carrier protein of Methylorubrum extorquens (strain CM4 / NCIMB 13688) (Methylobacterium extorquens).